The chain runs to 377 residues: Spore coat protein SA (377 aa).

The protein belongs to the glycosyltransferase group 1 family. Glycosyltransferase 4 subfamily.

This is Spore coat protein SA (cotSA) from Bacillus subtilis (strain 168).